We begin with the raw amino-acid sequence, 196 residues long: Pyridoxal 5'-phosphate synthase subunit PdxT (196 aa).

Glycine 47 to serine 49 contributes to the L-glutamine binding site. The Nucleophile role is filled by cysteine 79. L-glutamine-binding positions include arginine 106 and isoleucine 134–arginine 135. Residues histidine 170 and glutamate 172 each act as charge relay system in the active site.

Belongs to the glutaminase PdxT/SNO family. In the presence of PdxS, forms a dodecamer of heterodimers. Only shows activity in the heterodimer.

The catalysed reaction is aldehydo-D-ribose 5-phosphate + D-glyceraldehyde 3-phosphate + L-glutamine = pyridoxal 5'-phosphate + L-glutamate + phosphate + 3 H2O + H(+). It carries out the reaction L-glutamine + H2O = L-glutamate + NH4(+). It functions in the pathway cofactor biosynthesis; pyridoxal 5'-phosphate biosynthesis. Catalyzes the hydrolysis of glutamine to glutamate and ammonia as part of the biosynthesis of pyridoxal 5'-phosphate. The resulting ammonia molecule is channeled to the active site of PdxS. The polypeptide is Pyridoxal 5'-phosphate synthase subunit PdxT (Bacillus licheniformis (strain ATCC 14580 / DSM 13 / JCM 2505 / CCUG 7422 / NBRC 12200 / NCIMB 9375 / NCTC 10341 / NRRL NRS-1264 / Gibson 46)).